The primary structure comprises 311 residues: Retron Ec78 reverse transcriptase (311 aa).

The 227-residue stretch at 15–241 (DSGISAFLVT…HNRHVTGVTI (227 aa)) folds into the Reverse transcriptase domain. The Mg(2+) site is built by Asp-96, Asp-187, and Asp-188.

This sequence belongs to the bacterial reverse transcriptase family.

It catalyses the reaction DNA(n) + a 2'-deoxyribonucleoside 5'-triphosphate = DNA(n+1) + diphosphate. In terms of biological role, reverse transcriptase (RT) component of antiviral defense system retron Ec78, composed of a non-coding RNA (ncRNA), this reverse transcriptase (RT), a probable ATPase and a putative HNH endonuclease. Expression of retron Ec78 confers protection against bacteriophage T5. At multiplicity of infection (MOI) of 0.02 cultures slow growth when infected with T5 but do not collapse, at MOI 2 cultures enter growth stasis. Responsible for synthesis of msDNA-Ec78 (a linear ssDNA with a 5'-terminal phosphate residue). Unlike most known msDNAs the mature product does not have an RNA component. The retron transcript serves as primer and template for the reaction, and codes for the RT. Not mutagenic when cloned in E.coli. It is thought to be synthesized as a branched RNA with a 2',5'-phosphodiester linkage to ssDNA; the linkage is cleaved endonucleolytically by ExoVII (xseA-xseB) leaving the observed mature 5'-ssDNA terminus. Overexpression of the ncRNA and RT, which leads to increased levels of msDNA, is not mutagenic in vivo. As the stem in the msDNA does not have a mismatch it probably does not bind or sequester MutS and/or MutL. This chain is Retron Ec78 reverse transcriptase, found in Escherichia coli.